Here is a 154-residue protein sequence, read N- to C-terminus: Nuclear cap-binding protein subunit 2 (154 aa).

MRNA is bound by residues Tyr-10, Tyr-33, 102 to 106 (RCDWD), 113 to 117 (RQYGR), and 123 to 124 (QV). One can recognise an RRM domain in the interval 30–108 (STLYMGNLSF…RIIRCDWDAG (79 aa)).

It belongs to the RRM NCBP2 family. In terms of assembly, component of the nuclear cap-binding complex (CBC), a heterodimer composed of Cbp80 and Cbp20 that interacts with m7GpppG-capped RNA.

Its subcellular location is the nucleus. Functionally, component of the cap-binding complex (CBC), which binds co-transcriptionally to the 5' cap of pre-mRNAs and is involved in various processes such as pre-mRNA splicing and RNA-mediated gene silencing (RNAi). The CBC complex is involved in miRNA-mediated RNA interference and is required for primary microRNAs (miRNAs) processing. Also involved in innate immunity via the short interfering RNAs (siRNAs) processing machinery by restricting the viral RNA production. In the CBC complex, Cbp20 recognizes and binds capped RNAs (m7GpppG-capped RNA) but requires Cbp80 to stabilize the movement of its N-terminal loop and lock the CBC into a high affinity cap-binding state with the cap structure. This is Nuclear cap-binding protein subunit 2 from Bombyx mori (Silk moth).